A 123-amino-acid chain; its full sequence is Polyadenylate-binding protein-interacting protein 2B (123 aa).

The residue at position 1 (methionine 1) is an N-acetylmethionine. Over residues 1-13 (MNGSNMANTSPSV) the composition is skewed to polar residues. Disordered regions lie at residues 1–30 (MNGS…KENP) and 91–123 (NGLS…GEKY). Composition is skewed to basic and acidic residues over residues 14-30 (KSKE…KENP) and 113-123 (DAKEFIPGEKY).

The protein belongs to the PAIP2 family. As to quaternary structure, interacts (via central acidic portion and C-terminus) with PABPC1 (via the second and third RRM domains and the C-terminus). Post-translationally, ubiquitinated in vitro. In terms of tissue distribution, expressed in brain, cervix, heart, liver, ovary, kidney, prostate and testis.

Functionally, inhibits translation of capped and polyadenylated mRNAs by displacing PABPC1 from the poly(A) tail. The chain is Polyadenylate-binding protein-interacting protein 2B (PAIP2B) from Homo sapiens (Human).